Reading from the N-terminus, the 633-residue chain is DNA mismatch repair protein MutL (633 aa).

Positions 338–407 (AAPEPERTLP…VPPPTLRAIP (70 aa)) are disordered. Over residues 366–391 (PGSAFPAAARPAPASSAAQPPLSSSA) the composition is skewed to low complexity.

It belongs to the DNA mismatch repair MutL/HexB family.

This protein is involved in the repair of mismatches in DNA. It is required for dam-dependent methyl-directed DNA mismatch repair. May act as a 'molecular matchmaker', a protein that promotes the formation of a stable complex between two or more DNA-binding proteins in an ATP-dependent manner without itself being part of a final effector complex. The chain is DNA mismatch repair protein MutL from Akkermansia muciniphila (strain ATCC BAA-835 / DSM 22959 / JCM 33894 / BCRC 81048 / CCUG 64013 / CIP 107961 / Muc).